Here is a 315-residue protein sequence, read N- to C-terminus: 2-oxoglutarate and iron-dependent oxygenase domain-containing protein 3 (315 aa).

A disordered region spans residues 1 to 32 (MAPQRRGPPRVPEGNSAAERRHANSTKKDRLP). The Cytoplasmic portion of the chain corresponds to 1-41 (MAPQRRGPPRVPEGNSAAERRHANSTKKDRLPQEAQRTWLR). The span at 18 to 32 (AERRHANSTKKDRLP) shows a compositional bias: basic and acidic residues. A helical; Signal-anchor for type II membrane protein membrane pass occupies residues 42–62 (IVALGVSLALVTFLLWSSAGI). Topologically, residues 63–315 (DDDVAEVVAH…DHGIEDPVLT (253 aa)) are lumenal. The region spanning 203-305 (KPTFFSRINS…AITIAFTCNP (103 aa)) is the Fe2OG dioxygenase domain. An N-linked (GlcNAc...) asparagine glycan is attached at Asn-211. The Fe cation site is built by His-226 and Asp-228. Asn-263 is a glycosylation site (N-linked (GlcNAc...) asparagine). His-284 is a binding site for Fe cation. The active site involves Arg-294. Residue Arg-294 coordinates 2-oxoglutarate.

This sequence belongs to the OGFOD3 family. It depends on Fe(2+) as a cofactor. The cofactor is L-ascorbate.

The protein localises to the membrane. This Rattus norvegicus (Rat) protein is 2-oxoglutarate and iron-dependent oxygenase domain-containing protein 3 (Ogfod3).